Here is a 478-residue protein sequence, read N- to C-terminus: ATP synthase subunit beta (478 aa).

Residue 151 to 158 (GGAGVGKT) coordinates ATP.

This sequence belongs to the ATPase alpha/beta chains family. In terms of assembly, F-type ATPases have 2 components, CF(1) - the catalytic core - and CF(0) - the membrane proton channel. CF(1) has five subunits: alpha(3), beta(3), gamma(1), delta(1), epsilon(1). CF(0) has three main subunits: a(1), b(2) and c(9-12). The alpha and beta chains form an alternating ring which encloses part of the gamma chain. CF(1) is attached to CF(0) by a central stalk formed by the gamma and epsilon chains, while a peripheral stalk is formed by the delta and b chains.

The protein resides in the cell inner membrane. It catalyses the reaction ATP + H2O + 4 H(+)(in) = ADP + phosphate + 5 H(+)(out). In terms of biological role, produces ATP from ADP in the presence of a proton gradient across the membrane. The catalytic sites are hosted primarily by the beta subunits. The polypeptide is ATP synthase subunit beta (Azorhizobium caulinodans (strain ATCC 43989 / DSM 5975 / JCM 20966 / LMG 6465 / NBRC 14845 / NCIMB 13405 / ORS 571)).